The sequence spans 415 residues: ATP-dependent Clp protease ATP-binding subunit ClpX (415 aa).

Residues 1–53 enclose the ClpX-type ZB domain; the sequence is MLRSKGDLVLGCSFCGKKEDERRRIVTGHGVSICNYCVERCAEYLRDRKPSAL. Positions 12, 15, 34, and 37 each coordinate Zn(2+). Residue 118 to 125 participates in ATP binding; it reads PTGSGKTL.

Belongs to the ClpX chaperone family. In terms of assembly, component of the ClpX-ClpP complex. Forms a hexameric ring that, in the presence of ATP, binds to fourteen ClpP subunits assembled into a disk-like structure with a central cavity, resembling the structure of eukaryotic proteasomes.

ATP-dependent specificity component of the Clp protease. It directs the protease to specific substrates. Can perform chaperone functions in the absence of ClpP. The protein is ATP-dependent Clp protease ATP-binding subunit ClpX of Treponema pallidum (strain Nichols).